The primary structure comprises 120 residues: Chaperonin GroEL (120 aa).

ATP is bound at residue 23-27 (DGTTT).

This sequence belongs to the chaperonin (HSP60) family. In terms of assembly, forms a cylinder of 14 subunits composed of two heptameric rings stacked back-to-back. Interacts with the co-chaperonin GroES.

Its subcellular location is the cytoplasm. The enzyme catalyses ATP + H2O + a folded polypeptide = ADP + phosphate + an unfolded polypeptide.. Its function is as follows. Together with its co-chaperonin GroES, plays an essential role in assisting protein folding. The GroEL-GroES system forms a nano-cage that allows encapsulation of the non-native substrate proteins and provides a physical environment optimized to promote and accelerate protein folding. The sequence is that of Chaperonin GroEL from Mycolicibacterium rhodesiae (Mycobacterium rhodesiae).